The primary structure comprises 146 residues: Nuclear export protein (146 aa).

Interacts with host HSC70.

It localises to the host cytoplasm. In terms of biological role, may mediate the nuclear export of encapsidated genomic RNAs (ribonucleoproteins, RNPs). Interaction of viral NEP with M1-Hsc70 is thought to promote nuclear export of the viral encapsidated genomes. The polypeptide is Nuclear export protein (Infectious salmon anemia virus (isolate Atlantic salmon/Norway/810/9/99) (ISAV)).